Consider the following 190-residue polypeptide: Protein GrpE (190 aa).

The interval 1–42 (MNEKDNQTTSEPENEQEIIDVNDSGEQPEENETEQPQEEAVE) is disordered. Acidic residues predominate over residues 26–42 (EQPEENETEQPQEEAVE).

It belongs to the GrpE family. In terms of assembly, homodimer.

It localises to the cytoplasm. Participates actively in the response to hyperosmotic and heat shock by preventing the aggregation of stress-denatured proteins, in association with DnaK and GrpE. It is the nucleotide exchange factor for DnaK and may function as a thermosensor. Unfolded proteins bind initially to DnaJ; upon interaction with the DnaJ-bound protein, DnaK hydrolyzes its bound ATP, resulting in the formation of a stable complex. GrpE releases ADP from DnaK; ATP binding to DnaK triggers the release of the substrate protein, thus completing the reaction cycle. Several rounds of ATP-dependent interactions between DnaJ, DnaK and GrpE are required for fully efficient folding. In Oceanobacillus iheyensis (strain DSM 14371 / CIP 107618 / JCM 11309 / KCTC 3954 / HTE831), this protein is Protein GrpE.